The chain runs to 313 residues: Protein FixB (313 aa).

255–283 is a binding site for FAD; sequence LYLAVGISGQIQHMVGANASQTIFAINKD.

It belongs to the ETF alpha-subunit/FixB family. In terms of assembly, heterodimer of FixA and FixB.

It participates in amine and polyamine metabolism; carnitine metabolism. Functionally, required for anaerobic carnitine reduction. May bring reductant to CaiA. The polypeptide is Protein FixB (Escherichia coli O8 (strain IAI1)).